The following is a 143-amino-acid chain: ATP synthase F(0) complex subunit C2, mitochondrial (143 aa).

A mitochondrion-targeting transit peptide spans 1-68 (MYTCAKFVST…RSFQTSAISR (68 aa)). Residues 84 to 104 (VGVAGSGAGIGTVFGSLIIGY) form a helical membrane-spanning segment. Lys-111 is modified (N6,N6,N6-trimethyllysine). The chain crosses the membrane as a helical span at residues 119 to 139 (ILGFALSEAMGLFCLMVAFLI).

Belongs to the ATPase C chain family. As to quaternary structure, F-type ATPases have 2 components, CF(1) - the catalytic core - and CF(0) - the membrane proton channel. CF(1) has five subunits: alpha(3), beta(3), gamma(1), delta(1), epsilon(1). CF(0) has three main subunits: a, b and c. Interacts with DNAJC30; interaction is direct. Trimethylated by ATPSCKMT at Lys-111. Methylation is required for proper incorporation of the C subunit into the ATP synthase complex and mitochondrial respiration.

The protein localises to the mitochondrion membrane. In terms of biological role, mitochondrial membrane ATP synthase (F(1)F(0) ATP synthase or Complex V) produces ATP from ADP in the presence of a proton gradient across the membrane which is generated by electron transport complexes of the respiratory chain. F-type ATPases consist of two structural domains, F(1) - containing the extramembraneous catalytic core and F(0) - containing the membrane proton channel, linked together by a central stalk and a peripheral stalk. During catalysis, ATP synthesis in the catalytic domain of F(1) is coupled via a rotary mechanism of the central stalk subunits to proton translocation. Part of the complex F(0) domain. A homomeric c-ring of probably 10 subunits is part of the complex rotary element. The protein is ATP synthase F(0) complex subunit C2, mitochondrial of Ovis aries (Sheep).